The chain runs to 150 residues: MVLCFPLLLLLLVLWGPVCPLHAWPKRLTKAHWFEIQHIQPSPLQCNRAMSGINNYTQHCKHQNTFLHDSFQNVAAVCDLLSIVCKNRRHNCHQSSKPVNMTDCRLTSGKYPQCRYSAAAQYKFFIVACDPPQKSDPPYKLVPVHLDSIL.

The N-terminal stretch at 1 to 23 (MVLCFPLLLLLLVLWGPVCPLHA) is a signal peptide. Catalysis depends on histidine 38, which acts as the Proton acceptor. Cystine bridges form between cysteine 46-cysteine 104, cysteine 60-cysteine 114, cysteine 78-cysteine 129, and cysteine 85-cysteine 92. The N-linked (GlcNAc...) asparagine glycan is linked to asparagine 55. Substrate contacts are provided by residues 61–65 (KHQNT) and lysine 86. Residue asparagine 100 is glycosylated (N-linked (GlcNAc...) asparagine). Residue arginine 105 coordinates substrate. Histidine 145 serves as the catalytic Proton donor.

The protein belongs to the pancreatic ribonuclease family. Interacts (via N-terminus) with bacterial lipopolysaccharide (LPS). In terms of tissue distribution, highly expressed in spleen (at protein level). Has little or no expression in healthy kidneys (at protein level). Detected in interstitial leukocytes in infected kidneys (at protein level). Expressed in ureter where it localizes to urothelial and submucosal leukocytes (at protein level). Strong expression in lung and thymus, and lower expression in heart, placenta, pancreas, liver, brain and skeletal muscle. Also expressed in monocytes and neutrophils.

Its subcellular location is the secreted. The protein resides in the lysosome. It localises to the cytoplasmic granule. Functionally, ribonuclease which shows a preference for the pyrimidines uridine and cytosine. Has potent antibacterial activity against a range of Gram-positive and Gram-negative bacteria, including P.aeruginosa, A.baumanii, M.luteus, S.aureus, E.faecalis, E.faecium, S.saprophyticus and E.coli. Causes loss of bacterial membrane integrity, and also promotes agglutination of Gram-negative bacteria. Probably contributes to urinary tract sterility. Bactericidal activity is independent of RNase activity. The sequence is that of Ribonuclease K6 (RNASE6) from Homo sapiens (Human).